We begin with the raw amino-acid sequence, 485 residues long: MAKNYAALARSVIAALGGVDNISAVTHCMTRLRFVIKDDALIDSPTLKTIPGVLGVVRSDNQCQVIIGNTVSQAFQEVVSLLPGDMQPAQPVGKPKLTLRRIGAGILDALIGTMSPLIPAIIGGSMVKLLAMILEMSGVLTKGSPTLTILNVIGDGAFFFLPLMVAASAAIKFKTNMSLAIAIAGVLVHPSFIELMAKAAQGEHVEFALIPVTAVKYTYTVIPALVMTWCLSYIERWVDSITPAVTKNFLKPMLIVLIAAPLAILLIGPIGIWIGSAISALVYTIHGYLGWLSVAIMGALWPLLVMTGMHRVFTPTIIQTIAETGKEGMVMPSEIGANLSLGGSSLAVAWKTKNPELRQTALAAAASAIMAGISEPALYGVAIRLKRPLIASLISGFICGAVAGMAGLASHSMAAPGLFTSVQFFDPANPMSIVWVFAVMALAVVLSFILTLLLGFEDIPVEEAAAQARKYQSVQPTVAKEVSLN.

The region spanning 1 to 88 (MAKNYAALAR…VSLLPGDMQP (88 aa)) is the PTS EIIB type-1 domain. Cys28 acts as the Phosphocysteine intermediate; for EIIB activity in catalysis. 10 consecutive transmembrane segments (helical) span residues 102–122 (IGAG…PAII), 147–167 (LTIL…MVAA), 177–197 (MSLA…ELMA), 207–227 (FALI…ALVM), 254–274 (LIVL…GIWI), 285–305 (IHGY…PLLV), 330–350 (VMPS…AVAW), 363–383 (AAAA…GVAI), 389–409 (LIAS…AGLA), and 433–453 (IVWV…LTLL). Residues 108–470 (DALIGTMSPL…VEEAAAQARK (363 aa)) enclose the PTS EIIC type-1 domain.

It localises to the cell inner membrane. Functionally, the phosphoenolpyruvate-dependent sugar phosphotransferase system (sugar PTS), a major carbohydrate active -transport system, catalyzes the phosphorylation of incoming sugar substrates concomitantly with their translocation across the cell membrane. This system is involved in arbutin, cellobiose, and salicin transport. The chain is PTS system arbutin-, cellobiose-, and salicin-specific EIIBC component (ascF) from Escherichia coli (strain K12).